A 159-amino-acid polypeptide reads, in one-letter code: Regulator of G-protein signaling 13 (159 aa).

One can recognise an RGS domain in the interval 34 to 150; it reads SFENLMATKY…LKSEMYQKLL (117 aa).

Functionally, inhibits signal transduction by increasing the GTPase activity of G protein alpha subunits thereby driving them into their inactive GDP-bound form. Binds to both G(i)-alpha and G(q)-alpha. In Homo sapiens (Human), this protein is Regulator of G-protein signaling 13 (RGS13).